We begin with the raw amino-acid sequence, 361 residues long: Phosphoserine aminotransferase (361 aa).

L-glutamate contacts are provided by serine 9 and arginine 42. Residues 76 to 77 (AR), tryptophan 102, threonine 153, aspartate 173, and glutamine 196 contribute to the pyridoxal 5'-phosphate site. Residue lysine 197 is modified to N6-(pyridoxal phosphate)lysine. 238-239 (NT) provides a ligand contact to pyridoxal 5'-phosphate.

Belongs to the class-V pyridoxal-phosphate-dependent aminotransferase family. SerC subfamily. In terms of assembly, homodimer. Pyridoxal 5'-phosphate is required as a cofactor.

The protein localises to the cytoplasm. It carries out the reaction O-phospho-L-serine + 2-oxoglutarate = 3-phosphooxypyruvate + L-glutamate. The enzyme catalyses 4-(phosphooxy)-L-threonine + 2-oxoglutarate = (R)-3-hydroxy-2-oxo-4-phosphooxybutanoate + L-glutamate. It participates in amino-acid biosynthesis; L-serine biosynthesis; L-serine from 3-phospho-D-glycerate: step 2/3. Its pathway is cofactor biosynthesis; pyridoxine 5'-phosphate biosynthesis; pyridoxine 5'-phosphate from D-erythrose 4-phosphate: step 3/5. Functionally, catalyzes the reversible conversion of 3-phosphohydroxypyruvate to phosphoserine and of 3-hydroxy-2-oxo-4-phosphonooxybutanoate to phosphohydroxythreonine. The chain is Phosphoserine aminotransferase from Serratia proteamaculans (strain 568).